The chain runs to 536 residues: Probable cytochrome P450 318a1 (536 aa).

Over residues glutamate 439 to arginine 457 the composition is skewed to basic and acidic residues. Residues glutamate 439–aspartate 460 are disordered. Cysteine 477 lines the heme pocket.

Belongs to the cytochrome P450 family. Heme is required as a cofactor.

Its subcellular location is the endoplasmic reticulum membrane. It is found in the microsome membrane. Its function is as follows. May be involved in the metabolism of insect hormones and in the breakdown of synthetic insecticides. This Drosophila melanogaster (Fruit fly) protein is Probable cytochrome P450 318a1 (Cyp318a1).